A 365-amino-acid chain; its full sequence is MNILFAGGGTGGHLYPAVAMAAMLKEMVPGVELSFAGTASGIEAGEVPRLGYRLHLIPVRGLKRGRSLSALLSNIGVLTDFAASLFRAAALIRRERPDVVVGTGGFVSAPVLLAAQLLGRKTLIQEQNAFPGLTTRLLSILAREVHVAFREATGYLMKKRGVFLTGNPARSFPQRDSSIGREAFGFDPLLPTLLVFGGSRGARAINNAVLRHLGRLTAGSNLIWQTGALDFGRIEKEVSPGRNLWIGAYIEDMGSAYAAADLVLCRAGASSIAELTNLRKPSVLVPYPHATGDHQRHNARALSGPGAALMIEDRELENPEAIEGVIALLHDRERLQMMGAEAGRLSAPEAARILAGRIIDLAEEH.

UDP-N-acetyl-alpha-D-glucosamine-binding positions include 10–12 (TGG), N128, R170, S199, I250, and Q295.

The protein belongs to the glycosyltransferase 28 family. MurG subfamily.

The protein resides in the cell inner membrane. It catalyses the reaction di-trans,octa-cis-undecaprenyl diphospho-N-acetyl-alpha-D-muramoyl-L-alanyl-D-glutamyl-meso-2,6-diaminopimeloyl-D-alanyl-D-alanine + UDP-N-acetyl-alpha-D-glucosamine = di-trans,octa-cis-undecaprenyl diphospho-[N-acetyl-alpha-D-glucosaminyl-(1-&gt;4)]-N-acetyl-alpha-D-muramoyl-L-alanyl-D-glutamyl-meso-2,6-diaminopimeloyl-D-alanyl-D-alanine + UDP + H(+). Its pathway is cell wall biogenesis; peptidoglycan biosynthesis. Functionally, cell wall formation. Catalyzes the transfer of a GlcNAc subunit on undecaprenyl-pyrophosphoryl-MurNAc-pentapeptide (lipid intermediate I) to form undecaprenyl-pyrophosphoryl-MurNAc-(pentapeptide)GlcNAc (lipid intermediate II). The sequence is that of UDP-N-acetylglucosamine--N-acetylmuramyl-(pentapeptide) pyrophosphoryl-undecaprenol N-acetylglucosamine transferase from Chlorobium luteolum (strain DSM 273 / BCRC 81028 / 2530) (Pelodictyon luteolum).